Here is a 167-residue protein sequence, read N- to C-terminus: uncharacterized protein (167 aa).

Residues M1 to R10 are compositionally biased toward basic residues. The segment at M1–E23 is disordered.

This is an uncharacterized protein from Sinorhizobium fredii (strain NBRC 101917 / NGR234).